The following is a 1056-amino-acid chain: Carbamoyl phosphate synthase large chain (1056 aa).

Positions 1 to 399 (MKIDVSKVIV…AFQKAIRMLD (399 aa)) are carboxyphosphate synthetic domain. Positions 127, 167, 173, 174, 206, 208, 213, 239, 240, 241, 282, and 296 each coordinate ATP. The ATP-grasp 1 domain maps to 131-325 (QKTMKKVGLP…LAYIATKLAI (195 aa)). Gln-282, Glu-296, and Asn-298 together coordinate Mg(2+). Mn(2+)-binding residues include Gln-282, Glu-296, and Asn-298. Residues 400-536 (IGDELIGKYY…VTYDGVENDI (137 aa)) are oligomerization domain. A carbamoyl phosphate synthetic domain region spans residues 537–919 (PKPKKPSILV…LKSWLSVKPN (383 aa)). One can recognise an ATP-grasp 2 domain in the interval 661–849 (SKLLEKLGIP…LMELSAQAVL (189 aa)). The ATP site is built by Arg-697, Lys-736, Ile-738, Glu-742, Gly-766, Val-767, His-768, Ser-769, Gln-809, and Glu-820. Mg(2+) contacts are provided by Gln-809, Glu-820, and Asn-822. Residues Gln-809, Glu-820, and Asn-822 each contribute to the Mn(2+) site. The region spanning 915–1043 (SVKPNELPKT…REYWIRKIEE (129 aa)) is the MGS-like domain. An allosteric domain region spans residues 920-1056 (ELPKTSALIY…EYAASVVLRR (137 aa)).

It belongs to the CarB family. As to quaternary structure, composed of two chains; the small (or glutamine) chain promotes the hydrolysis of glutamine to ammonia, which is used by the large (or ammonia) chain to synthesize carbamoyl phosphate. Tetramer of heterodimers (alpha,beta)4. The cofactor is Mg(2+). It depends on Mn(2+) as a cofactor.

It carries out the reaction hydrogencarbonate + L-glutamine + 2 ATP + H2O = carbamoyl phosphate + L-glutamate + 2 ADP + phosphate + 2 H(+). It catalyses the reaction hydrogencarbonate + NH4(+) + 2 ATP = carbamoyl phosphate + 2 ADP + phosphate + 2 H(+). Its pathway is amino-acid biosynthesis; L-arginine biosynthesis; carbamoyl phosphate from bicarbonate: step 1/1. It participates in pyrimidine metabolism; UMP biosynthesis via de novo pathway; (S)-dihydroorotate from bicarbonate: step 1/3. Its function is as follows. Large subunit of the glutamine-dependent carbamoyl phosphate synthetase (CPSase). CPSase catalyzes the formation of carbamoyl phosphate from the ammonia moiety of glutamine, carbonate, and phosphate donated by ATP, constituting the first step of 2 biosynthetic pathways, one leading to arginine and/or urea and the other to pyrimidine nucleotides. The large subunit (synthetase) binds the substrates ammonia (free or transferred from glutamine from the small subunit), hydrogencarbonate and ATP and carries out an ATP-coupled ligase reaction, activating hydrogencarbonate by forming carboxy phosphate which reacts with ammonia to form carbamoyl phosphate. The sequence is that of Carbamoyl phosphate synthase large chain from Pyrococcus furiosus (strain ATCC 43587 / DSM 3638 / JCM 8422 / Vc1).